The chain runs to 88 residues: Small ribosomal subunit protein bS20 (88 aa).

The segment at 1–26 (MANTAQARKRARQNTKRRQNSASQRS) is disordered. Residues 7–19 (ARKRARQNTKRRQ) show a composition bias toward basic residues.

Belongs to the bacterial ribosomal protein bS20 family.

In terms of biological role, binds directly to 16S ribosomal RNA. The chain is Small ribosomal subunit protein bS20 from Psychrobacter arcticus (strain DSM 17307 / VKM B-2377 / 273-4).